A 581-amino-acid chain; its full sequence is ATP-dependent lipid A-core flippase (581 aa).

5 helical membrane-spanning segments follow: residues L15–I35, I62–F82, I152–I172, I252–P272, and I274–M294. An ABC transmembrane type-1 domain is found at I27–K309. In terms of domain architecture, ABC transporter spans I341–L577. G375–S382 is an ATP binding site.

This sequence belongs to the ABC transporter superfamily. Lipid exporter (TC 3.A.1.106) family. In terms of assembly, homodimer.

It localises to the cell membrane. The enzyme catalyses ATP + H2O + lipid A-core oligosaccharideSide 1 = ADP + phosphate + lipid A-core oligosaccharideSide 2.. Its function is as follows. Involved in lipopolysaccharide (LPS) biosynthesis. Translocates lipid A-core from the inner to the outer leaflet of the inner membrane. Transmembrane domains (TMD) form a pore in the inner membrane and the ATP-binding domain (NBD) is responsible for energy generation. This chain is ATP-dependent lipid A-core flippase, found in Wigglesworthia glossinidia brevipalpis.